Here is a 295-residue protein sequence, read N- to C-terminus: Acetylglutamate kinase (295 aa).

Substrate contacts are provided by residues 64 to 65 (GG), Arg-86, and Asn-179.

The protein belongs to the acetylglutamate kinase family. ArgB subfamily.

The protein resides in the cytoplasm. It carries out the reaction N-acetyl-L-glutamate + ATP = N-acetyl-L-glutamyl 5-phosphate + ADP. The protein operates within amino-acid biosynthesis; L-arginine biosynthesis; N(2)-acetyl-L-ornithine from L-glutamate: step 2/4. Its function is as follows. Catalyzes the ATP-dependent phosphorylation of N-acetyl-L-glutamate. The sequence is that of Acetylglutamate kinase from Thermosynechococcus vestitus (strain NIES-2133 / IAM M-273 / BP-1).